The chain runs to 229 residues: ATP synthase subunit a (229 aa).

6 consecutive transmembrane segments (helical) span residues 25-45 (ADAV…SIAA), 82-102 (FFPL…IGLV), 104-124 (GFFP…VVFV), 142-162 (FLGP…IGHL), 181-201 (LVLI…MMLM), and 202-222 (GVLV…IYIQ).

The protein belongs to the ATPase A chain family. As to quaternary structure, F-type ATPases have 2 components, CF(1) - the catalytic core - and CF(0) - the membrane proton channel. CF(1) has five subunits: alpha(3), beta(3), gamma(1), delta(1), epsilon(1). CF(0) has three main subunits: a(1), b(2) and c(9-12). The alpha and beta chains form an alternating ring which encloses part of the gamma chain. CF(1) is attached to CF(0) by a central stalk formed by the gamma and epsilon chains, while a peripheral stalk is formed by the delta and b chains.

The protein resides in the cell inner membrane. In terms of biological role, key component of the proton channel; it plays a direct role in the translocation of protons across the membrane. In Citrifermentans bemidjiense (strain ATCC BAA-1014 / DSM 16622 / JCM 12645 / Bem) (Geobacter bemidjiensis), this protein is ATP synthase subunit a.